The following is a 37-amino-acid chain: Hemextin B (37 aa).

As to quaternary structure, heterotetramer composed of 2 hemextin A and 2 hemextin B chains; non-covalently linked. Does not exist as a complex in the crude venom. May contain several disulfide bonds. Expressed by the venom gland.

The protein localises to the secreted. Functionally, hemextin B (monomer): does not show anticoagulant activity. Seems only to synergitically enhance hemextin A activity. Its function is as follows. Hemextin AB complex: specifically inhibits the activation of FX (F10) by the TF-FVIIa complex (extrinsic tenase complex (ETC)) (IC(50)= 100 nM, Ki=50 nM) by non-competitively inhibiting the enzymatic activity of FVIIa. The chain is Hemextin B from Hemachatus haemachatus (Rinkhals).